The following is a 787-amino-acid chain: ATP-dependent zinc metalloprotease FtsH (787 aa).

Residues 1-5 (MNRKN) lie on the Cytoplasmic side of the membrane. The chain crosses the membrane as a helical span at residues 6–26 (VIRMVTAIAVVVLLGWSFFYF). Over 27 to 110 (SDDTRGYKFV…KVTTAVNEGS (84 aa)) the chain is Extracellular. A helical transmembrane segment spans residues 111–131 (ILGELLVYVLPLLLLVGLFVM). Residues 132 to 787 (FSRMQGGARM…VSPSNPPAHG (656 aa)) are Cytoplasmic-facing. Position 203–210 (203–210 (GPPGTGKT)) interacts with ATP. H425 serves as a coordination point for Zn(2+). E426 is a catalytic residue. Zn(2+)-binding residues include H429 and D501. The segment at 616–787 (DFGGRIPSDK…VSPSNPPAHG (172 aa)) is disordered. 2 stretches are compositionally biased toward low complexity: residues 650–671 (AFKA…AAQS) and 700–709 (YGAPPGWHAP). Residues 710–720 (GWPPQQPPDYW) show a composition bias toward pro residues. Residues 721 to 732 (YPPEQQPSQSPY) are compositionally biased toward low complexity. A compositionally biased stretch (pro residues) spans 733–762 (WPQPAPSYPGQAPPPYPSYPPCPSYPPPGQ).

This sequence in the central section; belongs to the AAA ATPase family. In the C-terminal section; belongs to the peptidase M41 family. In terms of assembly, homohexamer. Zn(2+) is required as a cofactor.

Its subcellular location is the cell membrane. Functionally, acts as a processive, ATP-dependent zinc metallopeptidase for both cytoplasmic and membrane proteins. Plays a role in the quality control of integral membrane proteins. In Mycobacterium leprae (strain TN), this protein is ATP-dependent zinc metalloprotease FtsH.